The sequence spans 874 residues: Valine--tRNA ligase (874 aa).

The 'HIGH' region signature appears at 51–61 (PNVTGVLHIGH). Residues 533 to 537 (KMSKS) carry the 'KMSKS' region motif. Lysine 536 contributes to the ATP binding site. Residues 813–873 (LVARLKKQLE…IKQELDLLEQ (61 aa)) adopt a coiled-coil conformation.

It belongs to the class-I aminoacyl-tRNA synthetase family. ValS type 1 subfamily. As to quaternary structure, monomer.

It localises to the cytoplasm. It catalyses the reaction tRNA(Val) + L-valine + ATP = L-valyl-tRNA(Val) + AMP + diphosphate. In terms of biological role, catalyzes the attachment of valine to tRNA(Val). As ValRS can inadvertently accommodate and process structurally similar amino acids such as threonine, to avoid such errors, it has a 'posttransfer' editing activity that hydrolyzes mischarged Thr-tRNA(Val) in a tRNA-dependent manner. The chain is Valine--tRNA ligase from Helicobacter pylori (strain ATCC 700392 / 26695) (Campylobacter pylori).